We begin with the raw amino-acid sequence, 657 residues long: MSDIQEQQASIAITLPDGTVKNVPSGSTGFDIALSIGKRLADDALAVTINGKPTDLHAPVLCDANIEIVTFDSQLGRDIFWHTASHIMAQAIEEIFPGSRFGAGPATEQGFYYDVASEHRFREEDLRAIEQKMLEIAKRNIMLQREEMKRVDAIAYFTSVRNDPYKVEILEDTLKHVDTVSLYHQGDFADLCTGPHLPSTSRLKAVLLSNISSSYWRGDSSRENMQRIYGIAFPSDKLLKEHIARQEEAKRRDHRKLGTELELFMLSPEIGSGLPVWLPKGAVIRSELETFLKEEQRKRGYLPVYTPHIGNIELYKRSGHYPYYSDSQFPPLTYHDEDGKQEQYLLKPMNCPHHHLIYSSKLRSYRDLPIRLTEFGTVYRHEQSGELNGLVRARGFTQDDSHIYCTPEQLVDEICNAIDLTQFVFGTLGFSEVQTRLSMHDPANQQKYGGTAEIWEQAEKDVREAADRMGIDYFIGVGEASFYGPKIDFIVRDALGRKWQLGTVQVDYVMPERFDLSYIGSDGQKHRPVVIHRAPFGSMERFIGVLIEHTAGNFPLWLAPVQAVVLPIAEEVHDYAKTIHTALLAAGIRVEIDTRNEKIGRKIREAEIGKIPCMIIVGQKERDSGEISLRRHRSGDMGSFTVPGLIDILKKEISERT.

The TGS domain maps to 7-70 (QQASIAITLP…LCDANIEIVT (64 aa)). A catalytic region spans residues 253 to 555 (DHRKLGTELE…LIEHTAGNFP (303 aa)). 3 residues coordinate Zn(2+): C351, H402, and H532.

It belongs to the class-II aminoacyl-tRNA synthetase family. Homodimer. It depends on Zn(2+) as a cofactor.

It is found in the cytoplasm. It catalyses the reaction tRNA(Thr) + L-threonine + ATP = L-threonyl-tRNA(Thr) + AMP + diphosphate + H(+). In terms of biological role, catalyzes the attachment of threonine to tRNA(Thr) in a two-step reaction: L-threonine is first activated by ATP to form Thr-AMP and then transferred to the acceptor end of tRNA(Thr). Also edits incorrectly charged L-seryl-tRNA(Thr). In Chlorobium limicola (strain DSM 245 / NBRC 103803 / 6330), this protein is Threonine--tRNA ligase.